A 20-amino-acid chain; its full sequence is Beta-1,3-glucan-binding protein 2 (20 aa).

This sequence belongs to the insect beta-1,3-glucan binding protein family. Monomer.

The protein localises to the secreted. Functionally, involved in the recognition of invading microorganisms causing their aggregation. Activates the phenoloxidase cascade. Binds specifically to beta-1,3-glucan. Binds the A.niger cell wall component alpha-1,3-glucan, a fungal pathogen-associated molecular pattern (PAMP) that activates the host immune response. This is Beta-1,3-glucan-binding protein 2 from Galleria mellonella (Greater wax moth).